The primary structure comprises 341 residues: UDP-3-O-(3-hydroxymyristoyl)glucosamine N-acyltransferase (341 aa).

The active-site Proton acceptor is the His239.

It belongs to the transferase hexapeptide repeat family. LpxD subfamily. Homotrimer.

The catalysed reaction is a UDP-3-O-[(3R)-3-hydroxyacyl]-alpha-D-glucosamine + a (3R)-hydroxyacyl-[ACP] = a UDP-2-N,3-O-bis[(3R)-3-hydroxyacyl]-alpha-D-glucosamine + holo-[ACP] + H(+). It carries out the reaction UDP-3-O-[(3R)-3-hydroxytetradecanoyl]-alpha-D-glucosamine + (3R)-hydroxytetradecanoyl-[ACP] = UDP-2-N,3-O-bis[(3R)-3-hydroxytetradecanoyl]-alpha-D-glucosamine + holo-[ACP] + H(+). It functions in the pathway glycolipid biosynthesis; lipid IV(A) biosynthesis; lipid IV(A) from (3R)-3-hydroxytetradecanoyl-[acyl-carrier-protein] and UDP-N-acetyl-alpha-D-glucosamine: step 3/6. Catalyzes the N-acylation of UDP-3-O-(hydroxytetradecanoyl)glucosamine using 3-hydroxytetradecanoyl-ACP as the acyl donor. Is involved in the biosynthesis of lipid A, a phosphorylated glycolipid that anchors the lipopolysaccharide to the outer membrane of the cell. The polypeptide is UDP-3-O-(3-hydroxymyristoyl)glucosamine N-acyltransferase (Shigella dysenteriae serotype 1 (strain Sd197)).